A 338-amino-acid chain; its full sequence is N-acetyl-gamma-glutamyl-phosphate reductase (338 aa).

Residue cysteine 148 is part of the active site.

Belongs to the NAGSA dehydrogenase family. Type 1 subfamily.

It localises to the cytoplasm. It catalyses the reaction N-acetyl-L-glutamate 5-semialdehyde + phosphate + NADP(+) = N-acetyl-L-glutamyl 5-phosphate + NADPH + H(+). It functions in the pathway amino-acid biosynthesis; L-arginine biosynthesis; N(2)-acetyl-L-ornithine from L-glutamate: step 3/4. Its function is as follows. Catalyzes the NADPH-dependent reduction of N-acetyl-5-glutamyl phosphate to yield N-acetyl-L-glutamate 5-semialdehyde. In Leptospira interrogans serogroup Icterohaemorrhagiae serovar Lai (strain 56601), this protein is N-acetyl-gamma-glutamyl-phosphate reductase.